The sequence spans 525 residues: Exoglucanase 1 (525 aa).

Positions 1-18 are cleaved as a signal peptide; sequence MRTAKFATLAALVASAAA. Residues 19–467 are catalytic; sequence QQACSLTTER…AGNGGNNGGN (449 aa). Glu-231 (nucleophile) is an active-site residue. The active-site Proton donor is Glu-236. Asn-289 carries an N-linked (GlcNAc...) asparagine glycan. Residues 454-492 are disordered; that stretch reads GLPGAGNGGNNGGNPPPPTTTTSSAPATTTTASAGPKAG. A compositionally biased stretch (gly residues) spans 456-465; that stretch reads PGAGNGGNNG. The tract at residues 468-489 is linker; it reads PPPPTTTTSSAPATTTTASAGP. The segment covering 473–489 has biased composition (low complexity); that stretch reads TTTSSAPATTTTASAGP. Positions 489 to 525 constitute a CBM1 domain; sequence PKAGRWQQCGGIGFTGPTQCEEPYICTKLNDWYSQCL. Intrachain disulfides connect Cys-497–Cys-514 and Cys-508–Cys-524.

This sequence belongs to the glycosyl hydrolase 7 (cellulase C) family.

The enzyme catalyses Hydrolysis of (1-&gt;4)-beta-D-glucosidic linkages in cellulose and cellotetraose, releasing cellobiose from the non-reducing ends of the chains.. In terms of biological role, the biological conversion of cellulose to glucose generally requires three types of hydrolytic enzymes: (1) Endoglucanases which cut internal beta-1,4-glucosidic bonds; (2) Exocellobiohydrolases that cut the disaccharide cellobiose from the non-reducing end of the cellulose polymer chain; (3) Beta-1,4-glucosidases which hydrolyze the cellobiose and other short cello-oligosaccharides to glucose. This chain is Exoglucanase 1 (CBH-1), found in Humicola insolens (Soft-rot fungus).